The chain runs to 347 residues: Twinfilin-2 (347 aa).

ADF-H domains lie at 3–137 and 175–311; these read LVLV…RHIT and GLAF…DEVH. The tract at residues 314 to 347 is disordered; the sequence is QHAHKQAFAKPRGPAGKRGNKRLIKGGGENGGNS. Residues 338 to 347 are compositionally biased toward gly residues; it reads KGGGENGGNS.

It belongs to the actin-binding proteins ADF family. Twinfilin subfamily. In terms of assembly, interacts with G-actin; ADP-actin form and capping protein (CP).

The protein resides in the cytoplasm. It is found in the cytoskeleton. It localises to the perinuclear region. Functionally, actin-binding protein involved in motile and morphological processes. Inhibits actin polymerization, likely by sequestering G-actin. The chain is Twinfilin-2 (twf2) from Danio rerio (Zebrafish).